We begin with the raw amino-acid sequence, 174 residues long: 2-C-methyl-D-erythritol 2,4-cyclodiphosphate synthase (174 aa).

The a divalent metal cation site is built by aspartate 13, histidine 15, and histidine 61. Residue 13–15 (DAH) participates in 4-CDP-2-C-methyl-D-erythritol 2-phosphate binding. 4-CDP-2-C-methyl-D-erythritol 2-phosphate contacts are provided by residues 75–77 (DIG), 149–152 (TTTD), phenylalanine 156, and histidine 159.

This sequence belongs to the IspF family. As to quaternary structure, homotrimer. The cofactor is a divalent metal cation.

The enzyme catalyses 4-CDP-2-C-methyl-D-erythritol 2-phosphate = 2-C-methyl-D-erythritol 2,4-cyclic diphosphate + CMP. Its pathway is isoprenoid biosynthesis; isopentenyl diphosphate biosynthesis via DXP pathway; isopentenyl diphosphate from 1-deoxy-D-xylulose 5-phosphate: step 4/6. In terms of biological role, involved in the biosynthesis of isopentenyl diphosphate (IPP) and dimethylallyl diphosphate (DMAPP), two major building blocks of isoprenoid compounds. Catalyzes the conversion of 4-diphosphocytidyl-2-C-methyl-D-erythritol 2-phosphate (CDP-ME2P) to 2-C-methyl-D-erythritol 2,4-cyclodiphosphate (ME-CPP) with a corresponding release of cytidine 5-monophosphate (CMP). This Bifidobacterium longum (strain NCC 2705) protein is 2-C-methyl-D-erythritol 2,4-cyclodiphosphate synthase.